A 419-amino-acid chain; its full sequence is Serine hydroxymethyltransferase (419 aa).

(6S)-5,6,7,8-tetrahydrofolate contacts are provided by residues Leu121 and 125–127 (GHL). Lys230 carries the post-translational modification N6-(pyridoxal phosphate)lysine. 355–357 (SPF) serves as a coordination point for (6S)-5,6,7,8-tetrahydrofolate.

Belongs to the SHMT family. Homodimer. It depends on pyridoxal 5'-phosphate as a cofactor.

The protein resides in the cytoplasm. The enzyme catalyses (6R)-5,10-methylene-5,6,7,8-tetrahydrofolate + glycine + H2O = (6S)-5,6,7,8-tetrahydrofolate + L-serine. Its pathway is one-carbon metabolism; tetrahydrofolate interconversion. It functions in the pathway amino-acid biosynthesis; glycine biosynthesis; glycine from L-serine: step 1/1. Catalyzes the reversible interconversion of serine and glycine with tetrahydrofolate (THF) serving as the one-carbon carrier. This reaction serves as the major source of one-carbon groups required for the biosynthesis of purines, thymidylate, methionine, and other important biomolecules. Also exhibits THF-independent aldolase activity toward beta-hydroxyamino acids, producing glycine and aldehydes, via a retro-aldol mechanism. The protein is Serine hydroxymethyltransferase of Streptococcus equi subsp. zooepidemicus (strain H70).